The following is a 303-amino-acid chain: MIIDVNTPISSRLDKYLKRLYPLLTQGVIEKALRQKQITVNAQKAEASLRVKGGDKIFINDKFNLPVKQPEKLVFTDAEIKLAKKITTDYLIYADDNLIAINKPAGLATQGGTKINLSIDSALKYLNYKGADFKLVHRLDKKTSGLLLIAKNYLSSVKLHNAFKEKLVVKTYFAVTYGKPIKNVGEVRSNIEKSKGSTPKITDIDSENGKLAITYYKVLKSLDNNLFLIEFTPVTGRMHQLRLHAKLLGCPILGDDKYGNKEIMPYSKYMFLHANNICLSEKIFGQESKLEAKLPFYFTRRLT.

The region spanning S11–P70 is the S4 RNA-binding domain. The active site involves D140.

It belongs to the pseudouridine synthase RluA family.

The catalysed reaction is uridine(955/2504/2580) in 23S rRNA = pseudouridine(955/2504/2580) in 23S rRNA. Responsible for synthesis of pseudouridine from uracil at positions 955, 2504 and 2580 in 23S ribosomal RNA. This is Ribosomal large subunit pseudouridine synthase C (rluC) from Rickettsia conorii (strain ATCC VR-613 / Malish 7).